We begin with the raw amino-acid sequence, 319 residues long: 1-aminocyclopropane-1-carboxylate oxidase (319 aa).

The 101-residue stretch at 153 to 253 folds into the Fe2OG dioxygenase domain; sequence PTFGTKVSNY…RMSIASFYNP (101 aa). 3 residues coordinate Fe cation: His-177, Asp-179, and His-234.

It belongs to the iron/ascorbate-dependent oxidoreductase family. Fe cation serves as cofactor.

It catalyses the reaction 1-aminocyclopropane-1-carboxylate + L-ascorbate + O2 = ethene + L-dehydroascorbate + hydrogen cyanide + CO2 + 2 H2O. The protein operates within alkene biosynthesis; ethylene biosynthesis via S-adenosyl-L-methionine; ethylene from S-adenosyl-L-methionine: step 2/2. The protein is 1-aminocyclopropane-1-carboxylate oxidase (ACO) of Actinidia deliciosa (Kiwi).